A 396-amino-acid chain; its full sequence is Imidazolonepropionase (396 aa).

Fe(3+) is bound by residues His-70 and His-72. Zn(2+) is bound by residues His-70 and His-72. Residues Arg-79, Tyr-137, and His-164 each coordinate 4-imidazolone-5-propanoate. Residue Tyr-137 coordinates N-formimidoyl-L-glutamate. Residue His-227 participates in Fe(3+) binding. His-227 lines the Zn(2+) pocket. Position 230 (Gln-230) interacts with 4-imidazolone-5-propanoate. Asp-301 provides a ligand contact to Fe(3+). Asp-301 provides a ligand contact to Zn(2+). The N-formimidoyl-L-glutamate site is built by Asn-303 and Gly-305. 4-imidazolone-5-propanoate is bound at residue Ser-306.

It belongs to the metallo-dependent hydrolases superfamily. HutI family. Requires Zn(2+) as cofactor. The cofactor is Fe(3+).

Its subcellular location is the cytoplasm. It catalyses the reaction 4-imidazolone-5-propanoate + H2O = N-formimidoyl-L-glutamate. The protein operates within amino-acid degradation; L-histidine degradation into L-glutamate; N-formimidoyl-L-glutamate from L-histidine: step 3/3. In terms of biological role, catalyzes the hydrolytic cleavage of the carbon-nitrogen bond in imidazolone-5-propanoate to yield N-formimidoyl-L-glutamate. It is the third step in the universal histidine degradation pathway. This chain is Imidazolonepropionase, found in Mycolicibacterium smegmatis (strain ATCC 700084 / mc(2)155) (Mycobacterium smegmatis).